The primary structure comprises 306 residues: Acetaldehyde dehydrogenase 3 (306 aa).

Cys131 (acyl-thioester intermediate) is an active-site residue. Residues 162–170 (SVGPGTRKN) and Asn273 each bind NAD(+).

This sequence belongs to the acetaldehyde dehydrogenase family.

The enzyme catalyses acetaldehyde + NAD(+) + CoA = acetyl-CoA + NADH + H(+). This chain is Acetaldehyde dehydrogenase 3, found in Burkholderia lata (strain ATCC 17760 / DSM 23089 / LMG 22485 / NCIMB 9086 / R18194 / 383).